The chain runs to 415 residues: PRKCA-binding protein (415 aa).

A PDZ domain is found at 22–105 (KVTLQKDAQN…EVTIHYNKLQ (84 aa)). 2 residues coordinate Zn(2+): Cys44 and Cys46. Residue Thr82 is modified to Phosphothreonine. The 214-residue stretch at 144-357 (LCNDGLVKRL…CYAVLRDADV (214 aa)) folds into the AH domain. A disordered region spans residues 376–415 (EEFTDGEEEEEEEDTAAGEPSRDTRGAAGPLDKGGSWCDS). Acidic residues predominate over residues 377–391 (EFTDGEEEEEEEDTA). Residue Cys413 is the site of S-palmitoyl cysteine; by DHHC8 attachment.

In terms of assembly, monomer and homodimer. Interacts with CXADR. Interacts presynaptically with the glutamate receptors GRIA2, GRIA3, GRIK3, isoform 3 of GRIA4, isoform A of GRM4, GRM7 and GRM8; with NAPA and NAPB; and with BTG2. The interaction with NAPA and NAPB disrupts the interaction with GRIA2, conducting to the internalization of GRIA2. Interacts with PRKCA; with the amine transporters SLC6A2 and SLC6A3; with the channels ASIC1 and ASIC2; with the GTP-binding proteins ARF1 and ARF3; with the ephrin receptor tyrosine kinases EPHA7, EPHB1 and EPHB2; with ERBB2 and through its PDZ domain with the C-terminal tail of PRLHR. Interacts with UNC5A. Interacts (via AH domain) with NCS1/FREQ; in a calcium-dependent manner. Interacts with F-actin and associates with the ARP2/3 complex. Interacts (via PDZ domain) with ARF1 (activated); the interaction blocks Arp2/3 complex inhibition. Interacts with SORCS3. Post-translationally, phosphorylation at Thr-82 appears to inhibit the interaction with AMPA receptors. In terms of processing, palmitoylation on Cys-413 is essential for long-term synaptic depression (LTD).

It is found in the cytoplasm. The protein resides in the perinuclear region. It localises to the membrane. Its subcellular location is the postsynaptic density. The protein localises to the synapse. It is found in the synaptosome. The protein resides in the cytoskeleton. Probable adapter protein that bind to and organize the subcellular localization of a variety of membrane proteins containing some PDZ recognition sequence. Involved in the clustering of various receptors, possibly by acting at the receptor internalization level. Plays a role in synaptic plasticity by regulating the trafficking and internalization of AMPA receptors. May be regulated upon PRKCA activation. May regulate ASIC1/ASIC3 channel. Regulates actin polymerization by inhibiting the actin-nucleating activity of the Arp2/3 complex; the function is competitive with nucleation promoting factors and is linked to neuronal morphology regulation and AMPA receptor (AMPAR) endocytosis. Via interaction with the Arp2/3 complex involved in regulation of synaptic plasicity of excitatory synapses and required for spine shrinkage during long-term depression (LTD). Involved in regulation of astrocyte morphology, antagonistic to Arp2/3 complex activator WASL/N-WASP function. The polypeptide is PRKCA-binding protein (PICK1) (Macaca fascicularis (Crab-eating macaque)).